Here is a 196-residue protein sequence, read N- to C-terminus: METLNIFLVIFSLLGTIIIASSSDESSERKKRDLDTIDDTNNDFLTADKRRPGWGKRSFDDDILNNLDKRRPGWGKRSDMLFDSEEIEKRRPGWGKRSSSLYDDEKRKPGWGKRSSALLDDLSLYNSIVKRRPGWGKRSDTFKVDIRRPGWGKRTPGWGKRSGPNMCMDFQDEILQLYKLLNEAEKLHSECEALNI.

The N-terminal stretch at 1 to 22 is a signal peptide; sequence METLNIFLVIFSLLGTIIIASS. A propeptide spanning residues 23-48 is cleaved from the precursor; sequence SDESSERKKRDLDTIDDTNNDFLTAD. W54 is subject to Tryptophan amide. The propeptide occupies 58–68; sequence SFDDDILNNLD. Residue W74 is modified to Tryptophan amide. Positions 78–88 are excised as a propeptide; the sequence is SDMLFDSEEIE. Position 94 is a tryptophan amide (W94). A propeptide spanning residues 98-105 is cleaved from the precursor; it reads SSSLYDDE. W111 carries the post-translational modification Tryptophan amide. Residues 115–129 constitute a propeptide that is removed on maturation; the sequence is SSALLDDLSLYNSIV. W135 bears the Tryptophan amide mark. Positions 139 to 146 are excised as a propeptide; sequence SDTFKVDI. 2 positions are modified to tryptophan amide: W151 and W158. A propeptide spanning residues 162-196 is cleaved from the precursor; it reads SGPNMCMDFQDEILQLYKLLNEAEKLHSECEALNI.

As to expression, expressed in cerebral, pedal and visceral ganglia. TPGW-amide is found in pedal and cerebral ganglia and in shell adductor muscle (at protein level). RPGW-amide and KPGW-amide are found in pedal retractor muscle, ABRM and shell adductor muscle (at protein level).

Functionally, RPGW-amide, KPGW-amide and TPGW-amide tetrapeptides are involved in control of muscle contraction and may function as neurotransmitters. These peptides increase tension of the pedal retractor muscle and, in conjunction with FMRF-amide, increase peak tension of the anterior byssus retractor muscle (ABRM). The chain is APGW-amide-related neuropeptide from Mytilus edulis (Blue mussel).